Consider the following 382-residue polypeptide: Alkanesulfonate monooxygenase (382 aa).

This sequence belongs to the SsuD family. In terms of assembly, homotetramer.

It carries out the reaction an alkanesulfonate + FMNH2 + O2 = an aldehyde + FMN + sulfite + H2O + 2 H(+). In terms of biological role, catalyzes the desulfonation of aliphatic sulfonates. This is Alkanesulfonate monooxygenase from Serratia proteamaculans (strain 568).